A 323-amino-acid polypeptide reads, in one-letter code: Solute carrier family 35 member B1 (323 aa).

A run of 8 helical transmembrane segments spans residues 15–35 (LVCF…QETI), 51–71 (FALS…KLLI), 85–105 (WLYA…NSAL), 136–156 (YPLS…LFMY), 169–189 (TFGY…LTGV), 205–225 (MMLY…VFTG), 253–273 (LGQT…CSII), and 286–306 (VILF…LVFL). The Di-lysine motif signature appears at 319 to 323 (KKPSH).

The protein belongs to the nucleotide-sugar transporter family. SLC35B subfamily.

The protein resides in the endoplasmic reticulum membrane. Probable sugar transporter. The sequence is that of Solute carrier family 35 member B1 (slc35b1) from Xenopus tropicalis (Western clawed frog).